We begin with the raw amino-acid sequence, 397 residues long: Succinyl-diaminopimelate desuccinylase (397 aa).

Residue His-73 coordinates Zn(2+). Residue Asp-75 is part of the active site. Asp-106 serves as a coordination point for Zn(2+). Glu-140 (proton acceptor) is an active-site residue. Glu-141, Glu-169, and His-366 together coordinate Zn(2+).

This sequence belongs to the peptidase M20A family. DapE subfamily. Homodimer. The cofactor is Zn(2+). Co(2+) serves as cofactor.

The enzyme catalyses N-succinyl-(2S,6S)-2,6-diaminopimelate + H2O = (2S,6S)-2,6-diaminopimelate + succinate. It functions in the pathway amino-acid biosynthesis; L-lysine biosynthesis via DAP pathway; LL-2,6-diaminopimelate from (S)-tetrahydrodipicolinate (succinylase route): step 3/3. In terms of biological role, catalyzes the hydrolysis of N-succinyl-L,L-diaminopimelic acid (SDAP), forming succinate and LL-2,6-diaminopimelate (DAP), an intermediate involved in the bacterial biosynthesis of lysine and meso-diaminopimelic acid, an essential component of bacterial cell walls. The chain is Succinyl-diaminopimelate desuccinylase from Rhizobium johnstonii (strain DSM 114642 / LMG 32736 / 3841) (Rhizobium leguminosarum bv. viciae).